Consider the following 211-residue polypeptide: Thiamine-phosphate synthase (211 aa).

Residues 37-41 and Asn69 contribute to the 4-amino-2-methyl-5-(diphosphooxymethyl)pyrimidine site; that span reads QLRIK. Residues Asp70 and Asp89 each coordinate Mg(2+). Ser108 serves as a coordination point for 4-amino-2-methyl-5-(diphosphooxymethyl)pyrimidine. 134 to 136 contributes to the 2-[(2R,5Z)-2-carboxy-4-methylthiazol-5(2H)-ylidene]ethyl phosphate binding site; the sequence is TQT. Residue Lys137 participates in 4-amino-2-methyl-5-(diphosphooxymethyl)pyrimidine binding. Residues Gly166 and 186–187 each bind 2-[(2R,5Z)-2-carboxy-4-methylthiazol-5(2H)-ylidene]ethyl phosphate; that span reads VS.

This sequence belongs to the thiamine-phosphate synthase family. The cofactor is Mg(2+).

The enzyme catalyses 2-[(2R,5Z)-2-carboxy-4-methylthiazol-5(2H)-ylidene]ethyl phosphate + 4-amino-2-methyl-5-(diphosphooxymethyl)pyrimidine + 2 H(+) = thiamine phosphate + CO2 + diphosphate. The catalysed reaction is 2-(2-carboxy-4-methylthiazol-5-yl)ethyl phosphate + 4-amino-2-methyl-5-(diphosphooxymethyl)pyrimidine + 2 H(+) = thiamine phosphate + CO2 + diphosphate. It carries out the reaction 4-methyl-5-(2-phosphooxyethyl)-thiazole + 4-amino-2-methyl-5-(diphosphooxymethyl)pyrimidine + H(+) = thiamine phosphate + diphosphate. It participates in cofactor biosynthesis; thiamine diphosphate biosynthesis; thiamine phosphate from 4-amino-2-methyl-5-diphosphomethylpyrimidine and 4-methyl-5-(2-phosphoethyl)-thiazole: step 1/1. Condenses 4-methyl-5-(beta-hydroxyethyl)thiazole monophosphate (THZ-P) and 2-methyl-4-amino-5-hydroxymethyl pyrimidine pyrophosphate (HMP-PP) to form thiamine monophosphate (TMP). This is Thiamine-phosphate synthase from Salmonella agona (strain SL483).